The chain runs to 404 residues: Multidrug resistance protein MdtG (404 aa).

A run of 11 helical transmembrane segments spans residues 19 to 39 (LGCF…PLYV), 56 to 76 (LVFS…GGLA), 90 to 110 (LGMA…QFLI), 113 to 133 (ALLG…ATQV), 144 to 164 (TLST…GLLA), 171 to 191 (PVFF…FFFI), 222 to 242 (LFVT…ILTL), 254 to 274 (IAFI…LSAP), 288 to 308 (ILIV…FVQT), 317 to 337 (FLLG…LVYN), and 376 to 396 (AVFC…WNSL).

It belongs to the major facilitator superfamily. DHA1 family. MdtG (TC 2.A.1.2.20) subfamily.

The protein localises to the cell inner membrane. The polypeptide is Multidrug resistance protein MdtG (Salmonella schwarzengrund (strain CVM19633)).